The primary structure comprises 181 residues: MKFLFDYFPIICFFVAYKFWGIYIATAAAMVVSALQVAIYWIRFRRFEKFHVITLIFILLLGSFTLVFHNAIFIKWKPTIVYWIFAIVLFGSHFFGKHTLVHRMLKEKIELPAKTWSRLNLSWALFFLILGVLNLFVVYNFDTNTWVNFKLFGTLVLMLVFILGQAFYIARHAQNLKMNSR.

A run of 5 helical transmembrane segments spans residues 8 to 28 (FPII…ATAA), 53 to 73 (ITLI…NAIF), 76 to 96 (WKPT…HFFG), 121 to 141 (LSWA…VYNF), and 149 to 169 (FKLF…AFYI).

The protein belongs to the YciB family.

It is found in the cell inner membrane. Plays a role in cell envelope biogenesis, maintenance of cell envelope integrity and membrane homeostasis. This chain is Inner membrane-spanning protein YciB, found in Coxiella burnetii (strain CbuG_Q212) (Coxiella burnetii (strain Q212)).